Reading from the N-terminus, the 243-residue chain is 2,3-bisphosphoglycerate-dependent phosphoglycerate mutase (243 aa).

Residues 8-15 (RHGQSEWN), 21-22 (TG), Arg-60, 87-90 (ERHY), Lys-98, 114-115 (RR), and 183-184 (GN) each bind substrate. His-9 (tele-phosphohistidine intermediate) is an active-site residue. Catalysis depends on Glu-87, which acts as the Proton donor/acceptor.

This sequence belongs to the phosphoglycerate mutase family. BPG-dependent PGAM subfamily.

The enzyme catalyses (2R)-2-phosphoglycerate = (2R)-3-phosphoglycerate. The protein operates within carbohydrate degradation; glycolysis; pyruvate from D-glyceraldehyde 3-phosphate: step 3/5. In terms of biological role, catalyzes the interconversion of 2-phosphoglycerate and 3-phosphoglycerate. This chain is 2,3-bisphosphoglycerate-dependent phosphoglycerate mutase, found in Clostridium acetobutylicum (strain ATCC 824 / DSM 792 / JCM 1419 / IAM 19013 / LMG 5710 / NBRC 13948 / NRRL B-527 / VKM B-1787 / 2291 / W).